Reading from the N-terminus, the 87-residue chain is Polyketide-8 synthase acyl carrier protein 2 (87 aa).

The Carrier domain occupies 8–83 (ALDKEQLREL…GTYELLTSKL (76 aa)). Ser43 is subject to O-(pantetheine 4'-phosphoryl)serine.

In terms of processing, 4'-phosphopantetheine is transferred from CoA to a specific serine of the apo-ACP-like protein.

In terms of biological role, acyl carrier protein. The chain is Polyketide-8 synthase acyl carrier protein 2 from Streptomyces avermitilis (strain ATCC 31267 / DSM 46492 / JCM 5070 / NBRC 14893 / NCIMB 12804 / NRRL 8165 / MA-4680).